We begin with the raw amino-acid sequence, 453 residues long: o-phthalyl amidase (453 aa).

As to quaternary structure, monomer. Post-translationally, the N-terminus is blocked.

The enzyme catalyses a phtalamide + H2O = phthalate + a primary amine. With respect to regulation, inhibited by iodoacetate, p-hydroxymercuric benzoate and copper ions. Catalyzes the removal of the phthalyl group from phthalyl amides generating phthalate and an amine. The enzyme has a broad substrate specificity and hydrolyzes phthalylated amino acids, peptides, beta-lactams, aromatic and aliphatic amines; substitutions allowed on the phthalyl group include 6-F, 6-NH(2), 3-OH, and a nitrogen in the aromatic ring ortho to the carboxy group attached to the amine. The polypeptide is o-phthalyl amidase (Xanthobacter agilis).